Consider the following 155-residue polypeptide: 3-hydroxyacyl-[acyl-carrier-protein] dehydratase FabZ (155 aa).

H59 is a catalytic residue.

The protein belongs to the thioester dehydratase family. FabZ subfamily.

Its subcellular location is the cytoplasm. The enzyme catalyses a (3R)-hydroxyacyl-[ACP] = a (2E)-enoyl-[ACP] + H2O. Functionally, involved in unsaturated fatty acids biosynthesis. Catalyzes the dehydration of short chain beta-hydroxyacyl-ACPs and long chain saturated and unsaturated beta-hydroxyacyl-ACPs. This chain is 3-hydroxyacyl-[acyl-carrier-protein] dehydratase FabZ, found in Bartonella henselae (strain ATCC 49882 / DSM 28221 / CCUG 30454 / Houston 1) (Rochalimaea henselae).